A 760-amino-acid chain; its full sequence is DNA mismatch repair protein Mlh1 (760 aa).

Lys33 bears the N6-acetyllysine mark. ATP contacts are provided by residues Asn38, Asp63, 82-84 (TSK), and 100-104 (RGEAL). Lys241 bears the N6-acetyllysine mark. Residues 354 to 375 (GPSGEAARPTTGVASSSTSGSG) form a disordered region. The span at 363-375 (TTGVASSSTSGSG) shows a compositional bias: low complexity. Position 377 is an N6-acetyllysine (Lys377). Residues 400–409 (VSSLGPSQPQ) are compositionally biased toward polar residues. A disordered region spans residues 400 to 488 (VSSLGPSQPQ…EDSDVEMVEN (89 aa)). Residues 412-654 (APVRGARTEG…LLIDSYVPPL (243 aa)) form an interaction with EXO1 region. Positions 417-428 (ARTEGSPERATR) are enriched in basic and acidic residues. Low complexity predominate over residues 434 to 446 (LALPAPAEAAAES). Over residues 455–472 (METSDAAQKAAPTSSPGS) the composition is skewed to polar residues. The Nuclear localization signal signature appears at 475-478 (KRHR). At Ser481 the chain carries Phosphoserine.

The protein belongs to the DNA mismatch repair MutL/HexB family. As to quaternary structure, component of the DNA mismatch repair (MMR) complex composed at least of MSH2, MSH3, MSH6, PMS1 and MLH1. Heterodimer of MLH1 and PMS2 (MutL alpha), MLH1 and PMS1 (MutL beta) or MLH1 and MLH3 (MutL gamma). Forms a ternary complex with MutS alpha (MSH2-MSH6) or MutS beta (MSH2-MSH3). Part of the BRCA1-associated genome surveillance complex (BASC), which contains BRCA1, MSH2, MSH6, MLH1, ATM, BLM, PMS2 and the RAD50-MRE11-NBS1 protein complex. This association could be a dynamic process changing throughout the cell cycle and within subnuclear domains. Interacts with MCM9; the interaction recruits MLH1 to chromatin. Interacts with MCM8. Interacts with PMS2. Interacts with MBD4. Interacts with EXO1. Interacts with MTMR15/FAN1. Acetylated. Deacetylated by HDAC6 which prevents the MutL alpha complex, formed by the MLH1-PMS2 heterodimer, from being recruited to the MutS alpha complex, formed by the MSH2-MSH6 heterodimer, leading to tolerance of DNA damage.

The protein resides in the nucleus. Its subcellular location is the chromosome. Functionally, heterodimerizes with Pms2 to form MutL alpha, a component of the post-replicative DNA mismatch repair system (MMR). DNA repair is initiated by MutS alpha (Msh2-Msh6) or MutS beta (MSH2-MSH3) binding to a dsDNA mismatch, then MutL alpha is recruited to the heteroduplex. Assembly of the MutL-MutS-heteroduplex ternary complex in presence of RFC and PCNA is sufficient to activate endonuclease activity of Pms2. It introduces single-strand breaks near the mismatch and thus generates new entry points for the exonuclease EXO1 to degrade the strand containing the mismatch. DNA methylation would prevent cleavage and therefore assure that only the newly mutated DNA strand is going to be corrected. MutL alpha (Mlh1-Pms2) interacts physically with the clamp loader subunits of DNA polymerase III, suggesting that it may play a role to recruit the DNA polymerase III to the site of the MMR. Also implicated in DNA damage signaling, a process which induces cell cycle arrest and can lead to apoptosis in case of major DNA damages. Heterodimerizes with Mlh3 to form MutL gamma which plays a role in meiosis. This chain is DNA mismatch repair protein Mlh1 (Mlh1), found in Mus musculus (Mouse).